The chain runs to 494 residues: Subtilisin-like serine protease Pen ch 18.0101 (494 aa).

A signal peptide spans 1 to 16 (MKGFLSLTLLPLLVAA). A propeptide spans 17 to 136 (SPVAVNSIHN…IEKDSEVRTM (120 aa)) (removed in mature form). The Inhibitor I9 domain maps to 43–136 (SYIVVFKKHV…IEKDSEVRTM (94 aa)). The Peptidase S8 domain maps to 146-448 (PWGLARISHR…GGSANYTKIL (303 aa)). 2 igE-binding regions span residues 180–198 (VIDTGANVKHVDFEGRANW) and 209–231 (EDGNGHGTHCSGTIAGKKFGVAK). Residues Asp-182 and His-214 each act as charge relay system in the active site. 2 N-linked (GlcNAc...) asparagine glycosylation sites follow: Asn-244 and Asn-280. Ser-376 (charge relay system) is an active-site residue. Asn-443 carries N-linked (GlcNAc...) asparagine glycosylation. Positions 454 to 494 (KAHNAETTVEDRIGIIIDSAEKAFHKELGAIYSEIKDAVSV) are cleaved as a propeptide — removed in mature form.

This sequence belongs to the peptidase S8 family.

Serine protease. The protein is Subtilisin-like serine protease Pen ch 18.0101 of Penicillium rubens.